Reading from the N-terminus, the 186-residue chain is Ribosome-recycling factor (186 aa).

The protein belongs to the RRF family.

The protein localises to the cytoplasm. Responsible for the release of ribosomes from messenger RNA at the termination of protein biosynthesis. May increase the efficiency of translation by recycling ribosomes from one round of translation to another. The sequence is that of Ribosome-recycling factor from Beijerinckia indica subsp. indica (strain ATCC 9039 / DSM 1715 / NCIMB 8712).